A 533-amino-acid chain; its full sequence is Glucose-6-phosphate isomerase (533 aa).

Glu-341 (proton donor) is an active-site residue. Active-site residues include His-372 and Lys-501.

Belongs to the GPI family.

It is found in the cytoplasm. It carries out the reaction alpha-D-glucose 6-phosphate = beta-D-fructose 6-phosphate. The protein operates within carbohydrate biosynthesis; gluconeogenesis. It participates in carbohydrate degradation; glycolysis; D-glyceraldehyde 3-phosphate and glycerone phosphate from D-glucose: step 2/4. Catalyzes the reversible isomerization of glucose-6-phosphate to fructose-6-phosphate. This is Glucose-6-phosphate isomerase from Cereibacter sphaeroides (strain KD131 / KCTC 12085) (Rhodobacter sphaeroides).